We begin with the raw amino-acid sequence, 240 residues long: Ubiquinone biosynthesis O-methyltransferase (240 aa).

R44, G64, D85, and M129 together coordinate S-adenosyl-L-methionine.

It belongs to the methyltransferase superfamily. UbiG/COQ3 family.

The catalysed reaction is a 3-demethylubiquinol + S-adenosyl-L-methionine = a ubiquinol + S-adenosyl-L-homocysteine + H(+). The enzyme catalyses a 3-(all-trans-polyprenyl)benzene-1,2-diol + S-adenosyl-L-methionine = a 2-methoxy-6-(all-trans-polyprenyl)phenol + S-adenosyl-L-homocysteine + H(+). The protein operates within cofactor biosynthesis; ubiquinone biosynthesis. O-methyltransferase that catalyzes the 2 O-methylation steps in the ubiquinone biosynthetic pathway. This Escherichia fergusonii (strain ATCC 35469 / DSM 13698 / CCUG 18766 / IAM 14443 / JCM 21226 / LMG 7866 / NBRC 102419 / NCTC 12128 / CDC 0568-73) protein is Ubiquinone biosynthesis O-methyltransferase.